A 154-amino-acid polypeptide reads, in one-letter code: Protein X (154 aa).

A disordered region spans residues 28 to 48 (RPLPGPLGTLPPASPPAVPTD). The interval 68–117 (PCALRFTSARRMETTVNAHGNLPKVLHKRTLGLSAMSTTDLEAYFKDCVF) is mitochondrial targeting sequence.

This sequence belongs to the orthohepadnavirus protein X family. In terms of assembly, may form homodimer. May interact with host CEBPA, CFLAR, CREB1, DDB1, E4F1, HBXIP, HSPD1/HSP60, NFKBIA, POLR2E and SMAD4. Interacts with host SMC5-SMC6 complex and induces its degradation. Interacts with host TRPC4AP; leading to prevent ubiquitination of TRPC4AP. Interacts with host PLSCR1; this interaction promotes ubiquitination and degradation of HBx and impairs HBx-mediated cell proliferation. In terms of processing, a fraction may be phosphorylated in insect cells and HepG2 cells, a human hepatoblastoma cell line. Phosphorylated in vitro by host protein kinase C or mitogen-activated protein kinase. N-acetylated in insect cells.

It localises to the host cytoplasm. The protein localises to the host nucleus. It is found in the host mitochondrion. In terms of biological role, multifunctional protein that plays a role in silencing host antiviral defenses and promoting viral transcription. Does not seem to be essential for HBV infection. May be directly involved in development of cirrhosis and liver cancer (hepatocellular carcinoma). Most of cytosolic activities involve modulation of cytosolic calcium. The effect on apoptosis is controversial depending on the cell types in which the studies have been conducted. May induce apoptosis by localizing in mitochondria and causing loss of mitochondrial membrane potential. May also modulate apoptosis by binding host CFLAR, a key regulator of the death-inducing signaling complex (DISC). Promotes viral transcription by using the host E3 ubiquitin ligase DDB1 to target the SMC5-SMC6 complex to proteasomal degradation. This host complex would otherwise bind to viral episomal DNA, and prevents its transcription. Moderately stimulates transcription of many different viral and cellular transcription elements. Promoters and enhancers stimulated by HBx contain DNA binding sites for NF-kappa-B, AP-1, AP-2, c-EBP, ATF/CREB, or the calcium-activated factor NF-AT. In Hepatitis B virus genotype B2 subtype adw (isolate China/patient4/1996) (HBV-B), this protein is Protein X.